Consider the following 544-residue polypeptide: Chaperonin GroEL 2 (544 aa).

Residues 29–32, 86–90, G413, 479–481, and D495 each bind ATP; these read TLGP, DGTTT, and NAA.

This sequence belongs to the chaperonin (HSP60) family. Forms a cylinder of 14 subunits composed of two heptameric rings stacked back-to-back. Interacts with the co-chaperonin GroES.

The protein resides in the cytoplasm. It carries out the reaction ATP + H2O + a folded polypeptide = ADP + phosphate + an unfolded polypeptide.. Its function is as follows. Together with its co-chaperonin GroES, plays an essential role in assisting protein folding. The GroEL-GroES system forms a nano-cage that allows encapsulation of the non-native substrate proteins and provides a physical environment optimized to promote and accelerate protein folding. The polypeptide is Chaperonin GroEL 2 (Prochlorococcus marinus (strain MIT 9515)).